Reading from the N-terminus, the 98-residue chain is Integration host factor subunit alpha (98 aa).

Belongs to the bacterial histone-like protein family. Heterodimer of an alpha and a beta chain.

This protein is one of the two subunits of integration host factor, a specific DNA-binding protein that functions in genetic recombination as well as in transcriptional and translational control. The polypeptide is Integration host factor subunit alpha (Marinomonas sp. (strain MWYL1)).